Reading from the N-terminus, the 95-residue chain is uncharacterized protein (95 aa).

A signal peptide spans 1–22 (MLPGFTMIITSLLLTFFREVEH). Topologically, residues 23–52 (LLPECLTITNTPQRTLVLIQRFTLLQKVMT) are extracellular. The helical transmembrane segment at 53–69 (IHLLLSIGTLGSLFTLH) threads the bilayer. At 70–95 (PQLLKTNLLQKLHKELNSNLDYLISC) the chain is on the cytoplasmic side.

The protein localises to the host membrane. This is an uncharacterized protein from Acidianus bottle-shaped virus (isolate Italy/Pozzuoli) (ABV).